We begin with the raw amino-acid sequence, 273 residues long: Flagellin FljO (273 aa).

It belongs to the bacterial flagellin family. As to quaternary structure, in C.crescentus, the flagellar filament is composed of multiple flagellins of 29 kDa; 27 kDa and 25 kDa.

The protein resides in the secreted. Its subcellular location is the bacterial flagellum. Its function is as follows. Flagellin is the subunit protein which polymerizes to form the filaments of bacterial flagella. The chain is Flagellin FljO (fljO) from Caulobacter vibrioides (strain ATCC 19089 / CIP 103742 / CB 15) (Caulobacter crescentus).